The following is an 802-amino-acid chain: Leucine--tRNA ligase (802 aa).

Residues 40 to 51 (PYPSGAGLHVGH) carry the 'HIGH' region motif. Residues 576–580 (KMSKS) carry the 'KMSKS' region motif. Lys-579 is an ATP binding site.

The protein belongs to the class-I aminoacyl-tRNA synthetase family.

The protein resides in the cytoplasm. It catalyses the reaction tRNA(Leu) + L-leucine + ATP = L-leucyl-tRNA(Leu) + AMP + diphosphate. This chain is Leucine--tRNA ligase, found in Bacillus cereus (strain G9842).